Here is a 65-residue protein sequence, read N- to C-terminus: Large ribosomal subunit protein bL35 (65 aa).

The segment at 1–25 is disordered; it reads MPKMKSHRGAAKRFKKTGTGKLKRA.

The protein belongs to the bacterial ribosomal protein bL35 family.

The chain is Large ribosomal subunit protein bL35 from Clostridium botulinum (strain Eklund 17B / Type B).